Here is a 393-residue protein sequence, read N- to C-terminus: MGFFIPQSSLGNLKLYKYQSDDRSFLSNHVLRPFWRKFATIFPLWMAPNLVTLLGFCFIIFNVLTTLYYDPYFDQESPRWTYFSYAIGLFLYQTFDACDGMHARRTGQQGPLGELFDHCIDSINTTLSMIPVCSMTGMGYTYMTIFSQFAILCSFYLSTWEEYHTHKLYLAEFCGPVEGIIVLCISFIAVGIYGPQTIWHTKVAQFSWQDFVFDVETVHLMYAFCTGALIFNIVTAHTNVVRYYESQSTKSATPSKTAENISKAVNGLLPFFAYFSSIFTLVLIQPSFISLALILSIGFSVAFVVGRMIIAHLTMQPFPMVNFPFLIPTIQLVLYAFMVYVLDYQKGSIVSALVWMGLGLTLAIHGMFINDIIYDITTFLDIYALSIKHPKEI.

The Lumenal segment spans residues Met1–Thr40. Residues Ile41–Phe61 traverse the membrane as a helical segment. Over Asn62–Glu172 the chain is Cytoplasmic. The chain crosses the membrane as a helical span at residues Phe173–Tyr193. Over Gly194–Asp210 the chain is Lumenal. The chain crosses the membrane as a helical span at residues Phe211 to Phe231. The Cytoplasmic segment spans residues Asn232 to Lys263. The chain crosses the membrane as a helical span at residues Ala264–Ile284. A topological domain (lumenal) is located at residue Gln285. The chain crosses the membrane as a helical span at residues Pro286–Gly306. Residues Arg307–Met320 are Cytoplasmic-facing. The helical transmembrane segment at Val321–Val341 threads the bilayer. The Lumenal segment spans residues Leu342–Ser348. Residues Ile349–Ile369 traverse the membrane as a helical segment. Residues Asn370–Ile393 are Cytoplasmic-facing.

It belongs to the CDP-alcohol phosphatidyltransferase class-I family. Mg(2+) serves as cofactor.

Its subcellular location is the microsome membrane. The protein resides in the endoplasmic reticulum membrane. It is found in the mitochondrion outer membrane. It carries out the reaction CDP-choline + a 1,2-diacyl-sn-glycerol = a 1,2-diacyl-sn-glycero-3-phosphocholine + CMP + H(+). It catalyses the reaction CDP-N,N-dimethylethanolamine + a 1,2-diacyl-sn-glycerol = a 1,2-diacyl-sn-glycero-3-phospho-N,N-dimethylethanolamine + CMP + H(+). Its pathway is phospholipid metabolism; phosphatidylcholine biosynthesis; phosphatidylcholine from phosphocholine: step 2/2. With respect to regulation, requires a divalent cation activator, and is inhibited by CMP. Activated by phospholipids, especially phosphatidylcholine. Catalyzes the final step in the CDP-choline route leading to phosphatidylcholin (PC). Preferentially uses CDP-monomethylethanolamine as aminoalcohol substrate. Shows highest activity toward di- and mono-unsaturated diacylglycerol species as lipid substrates. The CDP-choline pathway only contributes to net PC synthesis if exogenous choline is present. In its absence, this pathway recycles choline from PC turnover and may contribute to maintaining the proper PC species composition. The polypeptide is Cholinephosphotransferase 1 (CPT1) (Saccharomyces cerevisiae (strain ATCC 204508 / S288c) (Baker's yeast)).